A 402-amino-acid polypeptide reads, in one-letter code: Major outer membrane porin (402 aa).

Positions 1–22 (MKKLLKSALLFAATGSALSLQA) are cleaved as a signal peptide.

It belongs to the chlamydial porin (CP) (TC 1.B.2) family. As to quaternary structure, part of a disulfide cross-linked outer membrane complex (COMC) composed of the major outer membrane porin, the small cysteine-rich protein (OmcA) and the large cysteine-rich periplasmic protein (OmcB).

Its subcellular location is the cell outer membrane. Its function is as follows. In elementary bodies (EBs, the infectious stage, which is able to survive outside the host cell) provides the structural integrity of the outer envelope through disulfide cross-links with the small cysteine-rich protein and the large cysteine-rich periplasmic protein. It has been described in publications as the Sarkosyl-insoluble COMC (Chlamydia outer membrane complex), and serves as the functional equivalent of peptidoglycan. Functionally, permits diffusion of specific solutes through the outer membrane. This is Major outer membrane porin (ompA) from Chlamydia psittaci (Chlamydophila psittaci).